The primary structure comprises 274 residues: Protein LNK4 (274 aa).

Residues 209 to 249 are disordered; that stretch reads NSQQKSDSNSDEFLEDRTRETEFETKLNRQSRGQSHIQQDG. Residues 223 to 235 show a composition bias toward basic and acidic residues; that stretch reads EDRTRETEFETKL. Polar residues predominate over residues 236–249; it reads NRQSRGQSHIQQDG.

As to quaternary structure, interacts with REV8.

In terms of biological role, probable transcriptional coactivator. The polypeptide is Protein LNK4 (Arabidopsis thaliana (Mouse-ear cress)).